The chain runs to 476 residues: Glutamate--tRNA ligase (476 aa).

The short motif at 9 to 19 is the 'HIGH' region element; that stretch reads PSPTGTLHIGT. Residues 248-252 carry the 'KMSKS' region motif; it reads KLSKR. An ATP-binding site is contributed by K251.

It belongs to the class-I aminoacyl-tRNA synthetase family. Glutamate--tRNA ligase type 1 subfamily. Monomer.

It localises to the cytoplasm. It carries out the reaction tRNA(Glu) + L-glutamate + ATP = L-glutamyl-tRNA(Glu) + AMP + diphosphate. Its function is as follows. Catalyzes the attachment of glutamate to tRNA(Glu) in a two-step reaction: glutamate is first activated by ATP to form Glu-AMP and then transferred to the acceptor end of tRNA(Glu). In Synechococcus sp. (strain CC9311), this protein is Glutamate--tRNA ligase.